Consider the following 125-residue polypeptide: Steroid Delta-isomerase (125 aa).

Tyr14 (proton donor) is an active-site residue. Asp38 functions as the Proton acceptor in the catalytic mechanism. Asp99 serves as a coordination point for substrate.

Homodimer.

It carries out the reaction a 3-oxo-Delta(5)-steroid = a 3-oxo-Delta(4)-steroid. This Comamonas testosteroni (Pseudomonas testosteroni) protein is Steroid Delta-isomerase (ksi).